A 279-amino-acid chain; its full sequence is Pantothenate synthetase (279 aa).

26–33 (MGNLHEGH) serves as a coordination point for ATP. The active-site Proton donor is the H33. Q57 is a (R)-pantoate binding site. A beta-alanine-binding site is contributed by Q57. 144 to 147 (GKKD) contributes to the ATP binding site. Q150 contacts (R)-pantoate. ATP contacts are provided by residues V173 and 181–184 (LSSR).

This sequence belongs to the pantothenate synthetase family. Homodimer.

Its subcellular location is the cytoplasm. The catalysed reaction is (R)-pantoate + beta-alanine + ATP = (R)-pantothenate + AMP + diphosphate + H(+). It functions in the pathway cofactor biosynthesis; (R)-pantothenate biosynthesis; (R)-pantothenate from (R)-pantoate and beta-alanine: step 1/1. Catalyzes the condensation of pantoate with beta-alanine in an ATP-dependent reaction via a pantoyl-adenylate intermediate. This Burkholderia ambifaria (strain ATCC BAA-244 / DSM 16087 / CCUG 44356 / LMG 19182 / AMMD) (Burkholderia cepacia (strain AMMD)) protein is Pantothenate synthetase.